Here is an 88-residue protein sequence, read N- to C-terminus: MKKRNFSAEFKRESAQLVVDQKYTVADAAKAMDVGLSTMTRWVKQLRDERQGKTPKASPITPEQIEIRKLRKKLQRIEMENEILKRLL.

Belongs to the transposase 8 family.

Functionally, involved in the transposition of the insertion sequence IS911. The chain is Putative transposase InsN for insertion sequence element IS911B (insN2) from Escherichia coli (strain K12).